The following is a 178-amino-acid chain: Adenine phosphoribosyltransferase (178 aa).

Belongs to the purine/pyrimidine phosphoribosyltransferase family. In terms of assembly, homodimer.

It is found in the cytoplasm. The catalysed reaction is AMP + diphosphate = 5-phospho-alpha-D-ribose 1-diphosphate + adenine. It functions in the pathway purine metabolism; AMP biosynthesis via salvage pathway; AMP from adenine: step 1/1. Functionally, catalyzes a salvage reaction resulting in the formation of AMP, that is energically less costly than de novo synthesis. The protein is Adenine phosphoribosyltransferase of Helicobacter hepaticus (strain ATCC 51449 / 3B1).